A 421-amino-acid chain; its full sequence is Trimethyllysine dioxygenase, mitochondrial (421 aa).

Residues 1-15 (MWYHKLLHQQSRLQN) constitute a mitochondrion transit peptide. N6-acetyllysine occurs at positions 179 and 236. Fe cation contacts are provided by His242, Asp244, and His389.

This sequence belongs to the gamma-BBH/TMLD family. As to quaternary structure, homodimer. The cofactor is Fe(2+). Requires L-ascorbate as cofactor.

The protein localises to the mitochondrion matrix. It catalyses the reaction N(6),N(6),N(6)-trimethyl-L-lysine + 2-oxoglutarate + O2 = (3S)-3-hydroxy-N(6),N(6),N(6)-trimethyl-L-lysine + succinate + CO2. It participates in amine and polyamine biosynthesis; carnitine biosynthesis. Its function is as follows. Converts trimethyllysine (TML) into hydroxytrimethyllysine (HTML). This chain is Trimethyllysine dioxygenase, mitochondrial (Tmlhe), found in Rattus norvegicus (Rat).